Consider the following 1511-residue polypeptide: Bifunctional glutamate/proline--tRNA ligase (1511 aa).

Residues 164-758 form a glutamate--tRNA ligase region; it reads GTKWDVSENK…SSVLYNRVAA (595 aa). A 'HIGH' region motif is present at residues 204 to 214; it reads PEASGYLHIGH. The interval 296–315 is disordered; it reads AEQMKAEREQRAESKHRQNS. Positions 299–315 are enriched in basic and acidic residues; it reads MKAEREQRAESKHRQNS. Lys-300 carries the N6-acetyllysine; alternate modification. At Lys-300 the chain carries N6-malonyllysine; alternate. Phosphothreonine is present on Thr-355. Lys-417 carries the N6-acetyllysine modification. The 'KMSKS' region motif lies at 432–436; the sequence is VLSKR. Position 434 is a phosphoserine (Ser-434). 4 positions are modified to N6-acetyllysine: Lys-498, Lys-535, Lys-542, and Lys-637. Over residues 708 to 728 the composition is skewed to basic and acidic residues; sequence KEMPTSGSKEKTKAEPLKKET. The interval 708–741 is disordered; it reads KEMPTSGSKEKTKAEPLKKETSSAPKEGPVPAVS. At Ser-746 the chain carries Phosphoserine. One can recognise a WHEP-TRS 1 domain in the interval 748 to 804; sequence ESSVLYNRVAAQGDVVRELKAKKAAKEDVDAAVKQLLALKAEYKQKTGQEYKPGNPP. Residues 759 to 955 form a 3 X 57 AA approximate repeats region; that stretch reads QGDVVRELKA…GIEYKPVSAT (197 aa). Lys-787 carries the post-translational modification N6-acetyllysine. Residues 794 to 823 are disordered; that stretch reads TGQEYKPGNPPSAAAQSASTKSLPSAGEDR. Residues 807 to 816 show a composition bias toward polar residues; sequence AAQSASTKSL. Positions 821-877 constitute a WHEP-TRS 2 domain; that stretch reads EDRSLYDKIAAQGEVVRKLKAEKAPKAKVTEAVECLLSLKAEYKEKTGKEYVPGQPP. Lys-860 is subject to N6-acetyllysine. 2 disordered regions span residues 868–903 and 952–1015; these read GKEY…AKAL and VSAT…RLGL. Tyr-871 is subject to Phosphotyrosine. Residues 877 to 890 show a composition bias toward low complexity; it reads PASQKSQPSPASKA. Ser-885 is modified (phosphoserine; by CDK5). At Thr-897 the chain carries Phosphothreonine. Residues 899–955 form the WHEP-TRS 3 domain; that stretch reads EAKALFDRVACQGEVVRKLKAEKASKDQVDPAVQELLQLKAQYKSLTGIEYKPVSAT. The span at 957 to 975 shows a compositional bias: basic and acidic residues; that stretch reads SEDKDKKKKEKENKSEKQN. Gly residues predominate over residues 992–1005; that stretch reads QGGGLSSSGAGEGQ. Ser-997 carries the phosphoserine modification. Ser-998 bears the Phosphoserine; by RPS6KB1 mark. Ser-999 is subject to Phosphoserine. The segment at 1006–1511 is proline--tRNA ligase; it reads GPKKQTRLGL…KFYTLFGRSY (506 aa). Residues 1120–1122 and Arg-1151 contribute to the L-proline site; that span reads TSE. Residues Arg-1151, Glu-1153, Arg-1162, Thr-1163, Gln-1236, and Thr-1239 each coordinate ATP. Arg-1151 is modified (omega-N-methylarginine). Gln-1236 serves as a coordination point for Mg(2+). His-1241 is an L-proline binding site. The ATP site is built by Thr-1275 and Arg-1277. A Phosphoserine modification is found at Ser-1349. Zn(2+) contacts are provided by Cys-1447, Cys-1452, Cys-1494, and Cys-1496. Lys-1502 is modified (N6-acetyllysine).

This sequence in the N-terminal section; belongs to the class-I aminoacyl-tRNA synthetase family. Glutamate--tRNA ligase type 2 subfamily. It in the C-terminal section; belongs to the class-II aminoacyl-tRNA synthetase family. In terms of assembly, homodimer. Part of the aminoacyl-tRNA synthetase multienzyme complex, also know as multisynthetase complex, that is composed of the tRNA ligases for Arg (RARS1), Asp (DARS1), Gln (QARS1), Ile (IARS1), Leu (LARS1), Lys (KARS1), Met (MARS1) the bifunctional ligase for Glu and Pro (EPRS1) and the auxiliary subunits AIMP1/p43, AIMP2/p38 and EEF1E1/p18. Forms a linear complex that contains MARS1, EEF1E1, EPRS1 and AIMP2 that is at the core of the multisubunit complex. Interacts with TARS3. Interacts with DUS2L. Component of the GAIT complex which is composed of EPRS1, RPL13A and GAPDH. Interacts (phosphorylated at Ser-998) with SLC27A1; mediates the translocation of SLC27A1 from the cytoplasm to the plasma membrane thereby increasing the uptake of long-chain fatty acids. Post-translationally, phosphorylated at Ser-998 by RPS6KB1; triggers EPRS1 release from the aminoacyl-tRNA synthetase multienzyme complex. In monocytes, the IFN-gamma-induced phosphorylation at Ser-998 releases EPRS1 from the aminoacyl-tRNA synthetase multienzyme complex, allowing its association with the GAIT complex. Phosphorylation at Ser-998 is specifically required for the RPL13A-mediated interaction of the GAIT complex with eIF4G. Phosphorylation at Ser-998 by RPS6KB1, is also induced by insulin through activation of the mTORC1 signaling pathway and promotes the interaction of EPRS1 with SLC27A1.

The protein localises to the cytoplasm. It is found in the cytosol. It localises to the membrane. It carries out the reaction tRNA(Glu) + L-glutamate + ATP = L-glutamyl-tRNA(Glu) + AMP + diphosphate. It catalyses the reaction tRNA(Pro) + L-proline + ATP = L-prolyl-tRNA(Pro) + AMP + diphosphate. Functionally, multifunctional protein which primarily functions within the aminoacyl-tRNA synthetase multienzyme complex, also known as multisynthetase complex. Within the complex it catalyzes the attachment of both L-glutamate and L-proline to their cognate tRNAs in a two-step reaction where the amino acid is first activated by ATP to form a covalent intermediate with AMP. Subsequently, the activated amino acid is transferred to the acceptor end of the cognate tRNA to form L-glutamyl-tRNA(Glu) and L-prolyl-tRNA(Pro). Upon interferon-gamma stimulation, EPRS1 undergoes phosphorylation, causing its dissociation from the aminoacyl-tRNA synthetase multienzyme complex. It is recruited to form the GAIT complex, which binds to stem loop-containing GAIT elements found in the 3'-UTR of various inflammatory mRNAs, such as ceruloplasmin. The GAIT complex inhibits the translation of these mRNAs, allowing interferon-gamma to redirect the function of EPRS1 from protein synthesis to translation inhibition in specific cell contexts. Furthermore, it can function as a downstream effector in the mTORC1 signaling pathway, by promoting the translocation of SLC27A1 from the cytoplasm to the plasma membrane where it mediates the uptake of long-chain fatty acid by adipocytes. Thereby, EPRS1 also plays a role in fat metabolism and more indirectly influences lifespan. This is Bifunctional glutamate/proline--tRNA ligase from Cricetulus griseus (Chinese hamster).